The sequence spans 250 residues: uncharacterized protein (250 aa).

Ser-15, Leu-17, Asp-36, Asp-56, Val-57, and Cys-82 together coordinate NAD(+). Ser-143 is a binding site for substrate. The NAD(+) site is built by Tyr-156, Lys-160, Phe-189, and Thr-191. Residue Tyr-156 is the Proton acceptor of the active site.

The protein belongs to the short-chain dehydrogenases/reductases (SDR) family.

This is an uncharacterized protein from Mycobacterium tuberculosis (strain CDC 1551 / Oshkosh).